Consider the following 460-residue polypeptide: Nitrilase and fragile histidine triad fusion protein NitFhit (460 aa).

The CN hydrolase domain maps to 33–279 (ATIAVGQMRS…LDIGTAEVDL (247 aa)). Active-site residues include Glu-72, Lys-142, and Cys-183. The HIT domain maps to 315–422 (DRPFATNIVD…MPRRLGDFGH (108 aa)). The short motif at 407–411 (HVHFH) is the Histidine triad motif element. His-409 (tele-AMP-histidine intermediate) is an active-site residue.

The protein in the N-terminal section; belongs to the UPF0012 family. In terms of assembly, homotetramer. The cofactor is Mn(2+).

It carries out the reaction P(1),P(3)-bis(5'-adenosyl) triphosphate + H2O = AMP + ADP + 2 H(+). Cleaves A-5'-PPP-5'A to yield AMP and ADP. This is Nitrilase and fragile histidine triad fusion protein NitFhit from Drosophila melanogaster (Fruit fly).